The primary structure comprises 391 residues: Ferrochelatase (391 aa).

Residues His-196 and Glu-281 each contribute to the Fe cation site.

The protein belongs to the ferrochelatase family.

The protein resides in the cytoplasm. It carries out the reaction heme b + 2 H(+) = protoporphyrin IX + Fe(2+). The protein operates within porphyrin-containing compound metabolism; protoheme biosynthesis; protoheme from protoporphyrin-IX: step 1/1. Its function is as follows. Catalyzes the ferrous insertion into protoporphyrin IX. This is Ferrochelatase from Prochlorococcus marinus subsp. pastoris (strain CCMP1986 / NIES-2087 / MED4).